Here is a 734-residue protein sequence, read N- to C-terminus: MAPRFPKFSQGLAQDPTTRRIWFGIATAHDFESHDDITEERLYQKIFASHFGQLTVIFLWTSGNLFHVAWQGNFEAWVQDPLHVRPIAHAIWDPHFGQPAVEAYTRGGASGPVNIAYSGVYQWWYTIGLRTNQDLYTGAIFLLALSALFLIAGWLHLQPGWKPGLSWFKNAESRLNHHLSGLFGVSSLAWAGHLVHVAIPESRGEHVRWQNLLTALPHPRGLEPFFSGQWSIYAQNPDSTNHFFGTTQGAGTAILTFLGGFHPQTQSLWLTDIAHHHLAIAVVFIIAGHMYRTNFGIGHSIKEILEAHTPPGGRLGRGHKGLYDTINNSLHFQLGLALAALGVITSLVAQHMYSLPAYAYIAQDFTTQAALYTHHQYIAGFLMTGAFAHGAIFFIRDYNPEQNKDNVLARMLEHKEAIISHLSWASLFLGFHTLGLYVHNDAMLAFGTPEKQILIEPVFAQWIQATHGKALYGFDVLLSSANSPAFNAGQSLWLPGWLDAINNNSNSLFLTIGPGDFLVHHAIALGLHTTTLILVKGALDARGSKLMPDKKEFGYSFPCDGPGRGGTCDISAWDAFYLAVFWMLNTIGWVTFYWHWKHITLWQGNVAQFNESSTYLMGWLRDYLWLNSSQLINGYNPFGMNSLSVWAWMFLFGHLVWAIGFMFLISWRGYWQELIETLAWAHERTPLANLVRWKDKPVALSIVQARLVGLAHFSVGYIFTYAAFLIASTSGKFG.

Helical transmembrane passes span 46–69, 135–158, 175–199, 273–291, 330–353, 369–395, 417–439, and 517–535; these read IFAS…FHVA, LYTG…LHLQ, LNHH…HVAI, IAHH…GHMY, LHFQ…QHMY, AALY…IFFI, AIIS…LYVH, and FLVH…LILV. 2 residues coordinate [4Fe-4S] cluster: cysteine 559 and cysteine 568. 2 helical membrane passes run 575–596 and 643–665; these read AFYL…YWHW and LSVW…MFLI. 3 residues coordinate chlorophyll a: histidine 654, methionine 662, and tyrosine 670. Tryptophan 671 is a binding site for phylloquinone. Residues 707–727 form a helical membrane-spanning segment; that stretch reads LVGLAHFSVGYIFTYAAFLIA.

It belongs to the PsaA/PsaB family. As to quaternary structure, the PsaA/B heterodimer binds the P700 chlorophyll special pair and subsequent electron acceptors. PSI consists of a core antenna complex that captures photons, and an electron transfer chain that converts photonic excitation into a charge separation. The eukaryotic PSI reaction center is composed of at least 11 subunits. Requires P700 is a chlorophyll a/chlorophyll a' dimer, A0 is one or more chlorophyll a, A1 is one or both phylloquinones and FX is a shared 4Fe-4S iron-sulfur center. as cofactor.

It is found in the plastid. Its subcellular location is the chloroplast thylakoid membrane. It catalyses the reaction reduced [plastocyanin] + hnu + oxidized [2Fe-2S]-[ferredoxin] = oxidized [plastocyanin] + reduced [2Fe-2S]-[ferredoxin]. In terms of biological role, psaA and PsaB bind P700, the primary electron donor of photosystem I (PSI), as well as the electron acceptors A0, A1 and FX. PSI is a plastocyanin-ferredoxin oxidoreductase, converting photonic excitation into a charge separation, which transfers an electron from the donor P700 chlorophyll pair to the spectroscopically characterized acceptors A0, A1, FX, FA and FB in turn. Oxidized P700 is reduced on the lumenal side of the thylakoid membrane by plastocyanin. The sequence is that of Photosystem I P700 chlorophyll a apoprotein A2 from Psilotum nudum (Whisk fern).